Consider the following 148-residue polypeptide: UPF0260 protein ECA2365 (148 aa).

This sequence belongs to the UPF0260 family.

This is UPF0260 protein ECA2365 from Pectobacterium atrosepticum (strain SCRI 1043 / ATCC BAA-672) (Erwinia carotovora subsp. atroseptica).